A 216-amino-acid chain; its full sequence is DNA gyrase subunit B (216 aa).

Residues 140-216 (SELYLVEGDS…PDKLRYHKII (77 aa)) enclose the Toprim domain.

The protein belongs to the type II topoisomerase GyrB family. Heterotetramer, composed of two GyrA and two GyrB chains. In the heterotetramer, GyrA contains the active site tyrosine that forms a transient covalent intermediate with DNA, while GyrB binds cofactors and catalyzes ATP hydrolysis.

The protein resides in the cytoplasm. It carries out the reaction ATP-dependent breakage, passage and rejoining of double-stranded DNA.. Functionally, a type II topoisomerase that negatively supercoils closed circular double-stranded (ds) DNA in an ATP-dependent manner to modulate DNA topology and maintain chromosomes in an underwound state. Negative supercoiling favors strand separation, and DNA replication, transcription, recombination and repair, all of which involve strand separation. Also able to catalyze the interconversion of other topological isomers of dsDNA rings, including catenanes and knotted rings. Type II topoisomerases break and join 2 DNA strands simultaneously in an ATP-dependent manner. In Acinetobacter sp. (strain T4), this protein is DNA gyrase subunit B (gyrB).